The sequence spans 119 residues: Evasin P983 (119 aa).

Positions M1 to A21 are cleaved as a signal peptide. 4 cysteine pairs are disulfide-bonded: C37–C59, C55–C97, C72–C102, and C92–C111. 2 N-linked (GlcNAc...) asparagine glycosylation sites follow: N48 and N67.

It is found in the secreted. In terms of biological role, salivary chemokine-binding protein which binds to host chemokines CCL2, CCL3 and CCL8. This chain is Evasin P983, found in Amblyomma cajennense (Cayenne tick).